The chain runs to 354 residues: Trans-L-3-hydroxyproline dehydratase (354 aa).

The active-site Proton acceptor is Cys104. Substrate-binding positions include 105–106, Asp269, and 274–275; these read GH and GS.

This sequence belongs to the proline racemase family. Homodimer.

It catalyses the reaction trans-3-hydroxy-L-proline = 1-pyrroline-2-carboxylate + H2O. Functionally, catalyzes the dehydration of trans-3-hydroxy-L-proline to Delta(1)-pyrroline-2-carboxylate (Pyr2C). The sequence is that of Trans-L-3-hydroxyproline dehydratase (L3HYPDH) from Bos taurus (Bovine).